The sequence spans 231 residues: NADH-ubiquinone oxidoreductase chain 4 (231 aa).

7 helical membrane passes run 1-21 (PIAG…YGII), 34-54 (LFIP…LTCL), 61-80 (SLIA…AVII), 84-106 (WGLS…LFCL), 118-138 (ILIL…WWLL), 156-176 (LLIV…LGLS), and 211-231 (LLMI…ELVI).

Belongs to the complex I subunit 4 family.

Its subcellular location is the mitochondrion membrane. It carries out the reaction a ubiquinone + NADH + 5 H(+)(in) = a ubiquinol + NAD(+) + 4 H(+)(out). Core subunit of the mitochondrial membrane respiratory chain NADH dehydrogenase (Complex I) that is believed to belong to the minimal assembly required for catalysis. Complex I functions in the transfer of electrons from NADH to the respiratory chain. The immediate electron acceptor for the enzyme is believed to be ubiquinone. This Hypnale hypnale (Merrem's hump-nosed viper) protein is NADH-ubiquinone oxidoreductase chain 4 (MT-ND4).